Reading from the N-terminus, the 356-residue chain is S-adenosylmethionine:tRNA ribosyltransferase-isomerase (356 aa).

The protein belongs to the QueA family. As to quaternary structure, monomer.

The protein localises to the cytoplasm. It carries out the reaction 7-aminomethyl-7-carbaguanosine(34) in tRNA + S-adenosyl-L-methionine = epoxyqueuosine(34) in tRNA + adenine + L-methionine + 2 H(+). Its pathway is tRNA modification; tRNA-queuosine biosynthesis. Functionally, transfers and isomerizes the ribose moiety from AdoMet to the 7-aminomethyl group of 7-deazaguanine (preQ1-tRNA) to give epoxyqueuosine (oQ-tRNA). The chain is S-adenosylmethionine:tRNA ribosyltransferase-isomerase from Shigella dysenteriae serotype 1 (strain Sd197).